The sequence spans 78 residues: D-alanyl carrier protein (78 aa).

Positions 1–78 (MDFKQEVLDV…NIVNQLSELK (78 aa)) constitute a Carrier domain. O-(pantetheine 4'-phosphoryl)serine is present on serine 36.

Belongs to the DltC family. In terms of processing, 4'-phosphopantetheine is transferred from CoA to a specific serine of apo-DCP.

It localises to the cytoplasm. It functions in the pathway cell wall biogenesis; lipoteichoic acid biosynthesis. Carrier protein involved in the D-alanylation of lipoteichoic acid (LTA). The loading of thioester-linked D-alanine onto DltC is catalyzed by D-alanine--D-alanyl carrier protein ligase DltA. The DltC-carried D-alanyl group is further transferred to cell membrane phosphatidylglycerol (PG) by forming an ester bond, probably catalyzed by DltD. D-alanylation of LTA plays an important role in modulating the properties of the cell wall in Gram-positive bacteria, influencing the net charge of the cell wall. The sequence is that of D-alanyl carrier protein from Bacillus subtilis (strain 168).